The following is a 760-amino-acid chain: MGLTGRKSEKGPVCWRRRVKSEYMRLRQLKRFRRADEVKSMFSSNRQKILERTDILNQEWKLRRIQPVHIMTPVSSLRGTRECTVDSGFSEFSRQVIPLKTLNAVASVPVMYSWSPLQQNFMVEDETVLHNIPYMGDEILDQDGTFIEELIKNYDGKVHGDRECGFINDEIFVELVNALNQYSDNEEDDEEDDHHDYKFEKMDLCDGKDDAEDHKEQLSSESHNNDGSKKFPSDKIFEAISSMFPDKGSTEELKEKYKELTEQQLPGALPPECTPNIDGPNAKSVQREQSLHSFHTLFCRRCFKYDCFLHPFQATPNTYKRKNMENLVDSKPCGIYCYMYMVQDGMVREYPAGVVPERAKTPSKRSTGRRRGRLPNSNSRPSTPTVNSETKDTDSDREGGADGNDSNDKDDDDKKDETTSSSEANSRCQTPVKLKLSSEPPENVDWSGAEASLFRVLIGTYYDNFCAIARLIGTKTCRQVYEFRVKESSIIARAPAVDENTPQRKKKRKHRLWATHCRKIQLKKDGSSNHVYNYQPCDHPRQPCDSSCPCVTAQNFCEKFCQCSSECQNRFPGCRCKAQCNTKQCPCYLAVRECDPDLCLTCGAAEHWDSKNVSCKNCSIQRGAKKHLLLAPSDVAGWGIFIKEPVQKNEFISEYCGEIISQDEADRRGKVYDKYMCSFLFNLNNDFVVDATRKGNKIRFANHSVNPNCYAKVMMVNGDHRIGIFAKRAIQTGEELFFDYRYSQADALKYVGIEREMEIP.

2 disordered regions span residues 208-231 (KDDA…SKKF) and 356-444 (PERA…PENV). The span at 361–373 (TPSKRSTGRRRGR) shows a compositional bias: basic residues. The span at 375–388 (PNSNSRPSTPTVNS) shows a compositional bias: polar residues. Positions 389–400 (ETKDTDSDREGG) are enriched in basic and acidic residues. One can recognise a CXC domain in the interval 517–619 (CRKIQLKKDG…SKNVSCKNCS (103 aa)). An SET domain is found at 626-741 (KHLLLAPSDV…TGEELFFDYR (116 aa)).

It belongs to the class V-like SAM-binding methyltransferase superfamily. Histone-lysine methyltransferase family. EZ subfamily. Component of the prc2/eed-ezh2 complex.

Its subcellular location is the nucleus. The enzyme catalyses L-lysyl(27)-[histone H3] + 3 S-adenosyl-L-methionine = N(6),N(6),N(6)-trimethyl-L-lysyl(27)-[histone H3] + 3 S-adenosyl-L-homocysteine + 3 H(+). In terms of biological role, polycomb group (PcG) protein. Catalytic subunit of the prc2/eed-ezh2 complex, which methylates 'Lys-9' and 'Lys-27' of histone H3, leading to transcriptional repression of the affected target gene. May regulate the circadian clock via histone methylation at the promoter of the circadian genes. This is Histone-lysine N-methyltransferase EZH2 (ezh2) from Danio rerio (Zebrafish).